Consider the following 325-residue polypeptide: Protein FAM50B (325 aa).

N-acetylalanine is present on alanine 2. 2 disordered regions span residues 92–111 (QHLEEQRLQQERQREQEQRR) and 137–160 (RRAGNLGKNPDVDTSFLPDRDREE).

This sequence belongs to the FAM50 family. In terms of tissue distribution, widely expressed. Mostly abundant in testis and adult and fetal brain.

This Homo sapiens (Human) protein is Protein FAM50B (FAM50B).